The sequence spans 297 residues: Succinate dehydrogenase [ubiquinone] iron-sulfur subunit, mitochondrial (297 aa).

Residues 47–140 (KKFEIYRWNP…SLKVYPLPHM (94 aa)) enclose the 2Fe-2S ferredoxin-type domain. The [2Fe-2S] cluster site is built by C100, C105, C108, and C120. One can recognise a 4Fe-4S ferredoxin-type domain in the interval 185-215 (DRSKLDGLYECILCACCSTSCPSYWWNAEKY). 3 residues coordinate [4Fe-4S] cluster: C195, C198, and C201. C205 lines the [3Fe-4S] cluster pocket. W210 is an a ubiquinone binding site. Residues C252 and C258 each contribute to the [3Fe-4S] cluster site. C262 is a binding site for [4Fe-4S] cluster.

This sequence belongs to the succinate dehydrogenase/fumarate reductase iron-sulfur protein family. In terms of assembly, component of complex II composed of four subunits: a flavoprotein (FP), an iron-sulfur protein (IP), and a cytochrome b composed of a large and a small subunit. Requires [2Fe-2S] cluster as cofactor. [3Fe-4S] cluster serves as cofactor. It depends on [4Fe-4S] cluster as a cofactor. As to expression, most abundant in the adult thorax and low in abdominal tissues.

The protein localises to the mitochondrion inner membrane. The enzyme catalyses a quinone + succinate = fumarate + a quinol. It participates in carbohydrate metabolism; tricarboxylic acid cycle; fumarate from succinate (eukaryal route): step 1/1. Iron-sulfur protein (IP) subunit of succinate dehydrogenase (SDH) that is involved in complex II of the mitochondrial electron transport chain and is responsible for transferring electrons from succinate to ubiquinone (coenzyme Q). The sequence is that of Succinate dehydrogenase [ubiquinone] iron-sulfur subunit, mitochondrial (SdhB) from Drosophila melanogaster (Fruit fly).